We begin with the raw amino-acid sequence, 59 residues long: Large ribosomal subunit protein uL30 (59 aa).

It belongs to the universal ribosomal protein uL30 family. As to quaternary structure, part of the 50S ribosomal subunit.

The sequence is that of Large ribosomal subunit protein uL30 from Actinobacillus pleuropneumoniae serotype 7 (strain AP76).